The chain runs to 358 residues: Nicotinate-nucleotide--dimethylbenzimidazole phosphoribosyltransferase (358 aa).

Glu313 (proton acceptor) is an active-site residue.

Belongs to the CobT family.

It carries out the reaction 5,6-dimethylbenzimidazole + nicotinate beta-D-ribonucleotide = alpha-ribazole 5'-phosphate + nicotinate + H(+). Its pathway is nucleoside biosynthesis; alpha-ribazole biosynthesis; alpha-ribazole from 5,6-dimethylbenzimidazole: step 1/2. Functionally, catalyzes the synthesis of alpha-ribazole-5'-phosphate from nicotinate mononucleotide (NAMN) and 5,6-dimethylbenzimidazole (DMB). The chain is Nicotinate-nucleotide--dimethylbenzimidazole phosphoribosyltransferase from Corynebacterium glutamicum (strain R).